Reading from the N-terminus, the 301-residue chain is MNWITNYVRPKINSMLGRREMPENLWIKDPSTGEMVFHKDLESNQFVIPSSGHHMRIKAKDRLRFFFDNGEYTTLEAPKVPLDPLKFRDEKKYIDRLKDYRSRTGMDDAIVNGLGTIEGLPIVATVQDFSFMGGSLGMGAGEAIIQGFEKAIELKRPFVLFASSGGARMQEGILSLMQLPRTTVAVEMLKEAGLPYIVVLTNPTTGGVTASYAMLGDIHIAEPGALIGFAGPRVIEQTIREKLPEGFQSSEYLMEHGMVDMVVSRLELKATIARLLKIMTKQPANSDAPAPQKPDADSKAA.

One can recognise a CoA carboxyltransferase N-terminal domain in the interval 25-294 (LWIKDPSTGE…NSDAPAPQKP (270 aa)).

The protein belongs to the AccD/PCCB family. As to quaternary structure, acetyl-CoA carboxylase is a heterohexamer composed of biotin carboxyl carrier protein (AccB), biotin carboxylase (AccC) and two subunits each of ACCase subunit alpha (AccA) and ACCase subunit beta (AccD).

The protein localises to the cytoplasm. The catalysed reaction is N(6)-carboxybiotinyl-L-lysyl-[protein] + acetyl-CoA = N(6)-biotinyl-L-lysyl-[protein] + malonyl-CoA. It functions in the pathway lipid metabolism; malonyl-CoA biosynthesis; malonyl-CoA from acetyl-CoA: step 1/1. Functionally, component of the acetyl coenzyme A carboxylase (ACC) complex. Biotin carboxylase (BC) catalyzes the carboxylation of biotin on its carrier protein (BCCP) and then the CO(2) group is transferred by the transcarboxylase to acetyl-CoA to form malonyl-CoA. The polypeptide is Acetyl-coenzyme A carboxylase carboxyl transferase subunit beta (Brucella abortus (strain 2308)).